A 274-amino-acid polypeptide reads, in one-letter code: Anamorsin homolog (274 aa).

Residues 1 to 154 are N-terminal SAM-like domain; the sequence is MDRTRKQCSV…KKPSWKIGSS (154 aa). Positions 154–185 are linker; the sequence is SFALKKSTKGSVKVNLDDDLIDEDSLLTEEDM. [2Fe-2S] cluster is bound by residues C196, C205, C208, and C210. Residues 196–210 form a fe-S binding site A region; it reads CEVGSTRKACKNCTC. [4Fe-4S] cluster is bound by residues C235, C238, C246, and C249. Short sequence motifs (cx2C motif) lie at residues 235–238 and 246–249; these read CGSC and CSTC. The interval 235–249 is fe-S binding site B; it reads CGSCGLGDAFRCSTC.

The protein belongs to the anamorsin family. In terms of assembly, monomer. [2Fe-2S] cluster serves as cofactor. [4Fe-4S] cluster is required as a cofactor.

The protein resides in the cytoplasm. The protein localises to the mitochondrion intermembrane space. Its function is as follows. Component of the cytosolic iron-sulfur (Fe-S) protein assembly (CIA) machinery. Required for the maturation of extramitochondrial Fe-S proteins. Part of an electron transfer chain functioning in an early step of cytosolic Fe-S biogenesis, facilitating the de novo assembly of a [4Fe-4S] cluster on the cytosolic Fe-S scaffold complex. Electrons are transferred from NADPH via a FAD- and FMN-containing diflavin oxidoreductase. Together with the diflavin oxidoreductase, also required for the assembly of the diferric tyrosyl radical cofactor of ribonucleotide reductase (RNR), probably by providing electrons for reduction during radical cofactor maturation in the catalytic small subunit. This is Anamorsin homolog from Ricinus communis (Castor bean).